Reading from the N-terminus, the 211-residue chain is 2,3-bisphosphoglycerate-dependent phosphoglycerate mutase (211 aa).

Residues 9 to 16 (RHGQSDWN), 22 to 23 (TG), Arg-61, 88 to 91 (ERDY), Lys-99, 115 to 116 (RR), and 159 to 160 (GN) each bind substrate. His-10 functions as the Tele-phosphohistidine intermediate in the catalytic mechanism. Glu-88 (proton donor/acceptor) is an active-site residue.

It belongs to the phosphoglycerate mutase family. BPG-dependent PGAM subfamily. In terms of assembly, homodimer.

It carries out the reaction (2R)-2-phosphoglycerate = (2R)-3-phosphoglycerate. Its pathway is carbohydrate degradation; glycolysis; pyruvate from D-glyceraldehyde 3-phosphate: step 3/5. In terms of biological role, catalyzes the interconversion of 2-phosphoglycerate and 3-phosphoglycerate. This chain is 2,3-bisphosphoglycerate-dependent phosphoglycerate mutase, found in Allorhizobium ampelinum (strain ATCC BAA-846 / DSM 112012 / S4) (Agrobacterium vitis (strain S4)).